The chain runs to 124 residues: Prefoldin subunit beta (124 aa).

This sequence belongs to the prefoldin subunit beta family. As to quaternary structure, heterohexamer of two alpha and four beta subunits.

Its subcellular location is the cytoplasm. In terms of biological role, molecular chaperone capable of stabilizing a range of proteins. Seems to fulfill an ATP-independent, HSP70-like function in archaeal de novo protein folding. The sequence is that of Prefoldin subunit beta from Pyrobaculum arsenaticum (strain DSM 13514 / JCM 11321 / PZ6).